A 484-amino-acid chain; its full sequence is Ornithine decarboxylase (484 aa).

N6-(pyridoxal phosphate)lysine is present on Lys-114. Pyridoxal 5'-phosphate is bound by residues Ser-245, Gly-282, and 315–318 (EPGR). A substrate-binding site is contributed by 381–382 (FD). The active-site Proton donor; shared with dimeric partner is the Cys-422. A substrate-binding site is contributed by Asp-423. A pyridoxal 5'-phosphate-binding site is contributed by Tyr-452.

The protein belongs to the Orn/Lys/Arg decarboxylase class-II family. As to quaternary structure, homodimer. Only the dimer is catalytically active, as the active sites are constructed of residues from both monomers. Pyridoxal 5'-phosphate serves as cofactor.

It is found in the cytoplasm. It catalyses the reaction L-ornithine + H(+) = putrescine + CO2. Its pathway is amine and polyamine biosynthesis; putrescine biosynthesis via L-ornithine pathway; putrescine from L-ornithine: step 1/1. Inhibited by antizyme (AZ) OAZ1 in response to polyamine levels. AZ inhibits the assembly of the functional homodimer by binding to ODC monomers and targeting them for ubiquitin-independent proteolytic destruction by the 26S proteasome. Functionally, catalyzes the first and rate-limiting step of polyamine biosynthesis that converts ornithine into putrescine, which is the precursor for the polyamines, spermidine and spermine. Polyamines are essential for cell proliferation and are implicated in cellular processes, ranging from DNA replication to apoptosis. The protein is Ornithine decarboxylase (spe-1) of Neurospora crassa (strain ATCC 24698 / 74-OR23-1A / CBS 708.71 / DSM 1257 / FGSC 987).